The primary structure comprises 403 residues: PP2A regulatory subunit TAP46 (403 aa).

Disordered stretches follow at residues 158–184 and 351–403; these read ERRGRSTKAAALSSPVETEEDDVLDDD and ANSS…TPCG. Composition is skewed to acidic residues over residues 174 to 184 and 366 to 375; these read ETEEDDVLDDD and EDDEEDDDDA. The segment covering 376 to 391 has biased composition (basic and acidic residues); the sequence is AQDKARAWDDWKDDNP.

Belongs to the IGBP1/TAP42 family.

Its function is as follows. Involved in the regulation of the TOR signaling pathway. Seems to act as a regulator of PP2A catalytic activity. The polypeptide is PP2A regulatory subunit TAP46 (Nicotiana tabacum (Common tobacco)).